The chain runs to 89 residues: UPF0367 protein CYA_1023 (89 aa).

Residues 69–89 (TKSGGPGAPGTRPGFLAQLQG) form a disordered region.

It belongs to the UPF0367 family.

The chain is UPF0367 protein CYA_1023 from Synechococcus sp. (strain JA-3-3Ab) (Cyanobacteria bacterium Yellowstone A-Prime).